The following is a 1369-amino-acid chain: ATP-dependent RNA helicase DHX29 (1369 aa).

2 disordered regions span residues 27-75 and 176-226; these read SAEA…TNDS and SQEF…KNME. Phosphoserine occurs at positions 71, 192, and 200. The segment covering 189-201 has biased composition (polar residues); sequence KFQSPQIQATISP. The span at 208-226 shows a compositional bias: basic and acidic residues; it reads KTYEEDPKSKPKKEEKNME. Coiled coils occupy residues 222-256, 283-310, and 492-519; these read EKNM…EEEE, LEKN…LEDH, and IAKL…NSED. A disordered region spans residues 502–526; sequence QQQQQQQHSENKRENSEDPEESWEN. The Helicase ATP-binding domain occupies 582–755; sequence VETLKRHRVV…FTHCPILRIS (174 aa). 595–602 is a binding site for ATP; that stretch reads GETGSGKS. Positions 702 to 705 match the DEAH box motif; the sequence is DEVH. In terms of domain architecture, Helicase C-terminal spans 849-1026; that stretch reads LILELLAYLD…ELCLHIMKCN (178 aa).

It belongs to the DEAD box helicase family. DEAH subfamily. In terms of assembly, part of the 43S pre-initiation complex (PIC) that contains at least Met-tRNA, EIF1, EIF1A (EIF1AX or EIF1AY), EIF2S1, EIF2S2, EIF2S3, EIF3A, EIF3B, EIF3C, EIF3D, EIF3E, EIF3F, EIF3G, EIF3H, EIF3I, EIF3J, EIF3K, EIF3L, EIF3M, DHX29 and the 40S ribosomal subunit.

It is found in the cytoplasm. It catalyses the reaction ATP + H2O = ADP + phosphate + H(+). Functionally, ATP-binding RNA helicase involved in translation initiation. Part of the 43S pre-initiation complex that is required for efficient initiation on mRNAs of higher eukaryotes with structured 5'-UTRs by promoting efficient NTPase-dependent 48S complex formation. Specifically binds to the 40S ribosome near the mRNA entrance. Does not possess a processive helicase activity. The protein is ATP-dependent RNA helicase DHX29 of Homo sapiens (Human).